The primary structure comprises 249 residues: Proteasome subunit alpha type-3 (249 aa).

S2 bears the N-acetylserine mark. O-acetylserine occurs at positions 214 and 220. A Glycyl lysine isopeptide (Lys-Gly) (interchain with G-Cter in ubiquitin) cross-link involves residue K221.

Belongs to the peptidase T1A family. Component of the 20S core complex of the 26S proteasome. The 26S proteasome is composed of a core protease (CP), known as the 20S proteasome, capped at one or both ends by the 19S regulatory particle (RP/PA700). The 20S proteasome core is composed of 28 subunits that are arranged in four stacked rings, resulting in a barrel-shaped structure. The two end rings are each formed by seven alpha subunits, and the two central rings are each formed by seven beta subunits. The catalytic chamber with the active sites is on the inside of the barrel. Ubiquitous low levels.

Its subcellular location is the cytoplasm. It localises to the nucleus. The proteasome is a multicatalytic proteinase complex which is characterized by its ability to cleave peptides with Arg, Phe, Tyr, Leu, and Glu adjacent to the leaving group at neutral or slightly basic pH. The proteasome has an ATP-dependent proteolytic activity. The chain is Proteasome subunit alpha type-3 (PAG1) from Arabidopsis thaliana (Mouse-ear cress).